A 282-amino-acid polypeptide reads, in one-letter code: 3-methyl-2-oxobutanoate hydroxymethyltransferase (282 aa).

Positions 63 and 102 each coordinate Mg(2+). Residues 63–64, Asp102, and Lys132 each bind 3-methyl-2-oxobutanoate; that span reads DS. Glu134 provides a ligand contact to Mg(2+). Glu200 functions as the Proton acceptor in the catalytic mechanism.

It belongs to the PanB family. As to quaternary structure, homodecamer; pentamer of dimers. It depends on Mg(2+) as a cofactor.

The protein localises to the cytoplasm. It carries out the reaction 3-methyl-2-oxobutanoate + (6R)-5,10-methylene-5,6,7,8-tetrahydrofolate + H2O = 2-dehydropantoate + (6S)-5,6,7,8-tetrahydrofolate. It functions in the pathway cofactor biosynthesis; (R)-pantothenate biosynthesis; (R)-pantoate from 3-methyl-2-oxobutanoate: step 1/2. Its function is as follows. Catalyzes the reversible reaction in which hydroxymethyl group from 5,10-methylenetetrahydrofolate is transferred onto alpha-ketoisovalerate to form ketopantoate. The polypeptide is 3-methyl-2-oxobutanoate hydroxymethyltransferase (Mycobacterium sp. (strain JLS)).